Consider the following 452-residue polypeptide: Transcription factor ETV6 (452 aa).

Over residues 1–10 (MSETPAQCSI) the composition is skewed to polar residues. Residues 1–30 (MSETPAQCSIKQERISYTPPESPVPSYASS) are disordered. Residue Lys-11 is modified to N6-acetyllysine; alternate. A Glycyl lysine isopeptide (Lys-Gly) (interchain with G-Cter in SUMO2); alternate cross-link involves residue Lys-11. The residue at position 18 (Thr-18) is a Phosphothreonine. Residue Ser-22 is modified to Phosphoserine. The PNT domain occupies 40 to 124 (ALRMEEDSIR…ELLQHILKQR (85 aa)). The tract at residues 158–262 (VQRTPRPSVD…PKPSSPRQES (105 aa)) is disordered. Ser-213 and Ser-238 each carry phosphoserine. A compositionally biased stretch (polar residues) spans 230-250 (QESYPLSVSPMENNHCPASSE). At Ser-257 the chain carries Phosphoserine; by MAPK14. Lys-288 participates in a covalent cross-link: Glycyl lysine isopeptide (Lys-Gly) (interchain with G-Cter in SUMO2). Lys-302 is subject to N6-acetyllysine; alternate. A Glycyl lysine isopeptide (Lys-Gly) (interchain with G-Cter in SUMO2); alternate cross-link involves residue Lys-302. Phosphoserine is present on Ser-323. The segment at residues 339–420 (RLLWDYVYQL…PGQRLLFRFM (82 aa)) is a DNA-binding region (ETS). Residues Lys-403 and Lys-421 each participate in a glycyl lysine isopeptide (Lys-Gly) (interchain with G-Cter in SUMO2) cross-link.

Belongs to the ETS family. In terms of assembly, can form homodimers or heterodimers with TEL2 or FLI1. Interacts with L3MBTL1 and HDAC9. Post-translationally, phosphorylation of Ser-257 by MAPK14 (p38) inhibits ETV6 transcriptional repression. As to expression, ubiquitous.

The protein resides in the nucleus. Functionally, transcriptional repressor; binds to the DNA sequence 5'-CCGGAAGT-3'. Plays a role in hematopoiesis and malignant transformation. The sequence is that of Transcription factor ETV6 (ETV6) from Homo sapiens (Human).